Here is a 1028-residue protein sequence, read N- to C-terminus: MRKKVDERIRTLIENGVKLRHRSMFVIIGDKARDQIVNLHHILSKSVVKSNPSVLWCYKNRLDISSHNKKRAKQLKKMKERGQLDPEKLDAFSLFLDVVDVTHCLYKDSERILGNTFGICILQDFEALTPNLLARTIETVEGGGLVVLLLQSLASLTSLCTMVMDVHDRFRTESHSEASGRFNERFLLSLASCKACVVMDDELNLLPLSSHIKSITKVPTKEDSEALSEAERDLKSLKDALNDDFPVGPLINKCCTLDQGKAVVTFFDAILDKTLRSIVALIASRGRGKSAALGLAVAGAVAAGYSNIYVTAPSPDNLKTVFEFVCKGFDALEYKEHLEYDVVRSVNPEFNKAIVRINIFKQHRQTIQYIQPHEHEKLSQVELLVIDEAAAIPLPVVKSLLGPYLVFLSSTVSGYEGTGRSLSLKLLQQLEEQSRAPVTGVEGSLSGCLFKKIELSESIRYASGDPIESWLNGLLCLDVANCLPNPACHPLPSQCDLYYVNRDTLFSYHKDSELFLQRMMALCVSSHYKNSPNDLQLLSDAPAHHLFVLLGPVDESKNQLPDILCVIQVCLEGQISRKSAEKSLREGHSPHGDQIPWKFCEQFRDVVFPKLSGARIVRIAVHPNAMKMGYGSAAVELLTRYFEGQLASISEGDDELEVEPSPVRVTEAAAKVSLLEEQIKPRANLPPLLVPLRDRRPERLHYIGVSFGLTLDLFRFWRKHKFAPFYISQIPSAVTGEHTCMLLKPLTLSNDEFEVDESDELGFFAPFYKDFRIRFSKLLSDKFKKMDYKLAMSVLNPKINFPEVDLTGNSPDGFLKKLDGVLSPYDMERFRAYTANLVDFNLVYDICKTLAHHYFQEKLPVSLSYVQASVLLCLGLQESDFSSIERQMQLERGQIYSLLLKVGKKLYKYLNGIATKELESTLPRLKDRVLEPHKVSVDEDLREGAKEVEEQMRARIEELLDPELLDQFAIGDKEAEALQKSKISSSGLISIESTKTDNKKEKPSGFDKSAKKRGNDKHSSTSNKKRRA.

ATP-binding positions include 286–295 (GRGKSAALGL) and R460. Positions 548 to 731 (VLLGPVDESK…FAPFYISQIP (184 aa)) constitute an N-acetyltransferase domain. Residues 619-621 (IAV), 626-632 (MKMGYGS), and K719 contribute to the acetyl-CoA site. The segment at 989–1028 (ISIESTKTDNKKEKPSGFDKSAKKRGNDKHSSTSNKKRRA) is disordered. Residues 994–1009 (TKTDNKKEKPSGFDKS) are compositionally biased toward basic and acidic residues.

This sequence belongs to the RNA cytidine acetyltransferase family. NAT10 subfamily.

The protein localises to the nucleus. Its subcellular location is the nucleolus. The enzyme catalyses a cytidine in 18S rRNA + acetyl-CoA + ATP + H2O = an N(4)-acetylcytidine in 18S rRNA + ADP + phosphate + CoA + H(+). The catalysed reaction is a cytidine in tRNA + acetyl-CoA + ATP + H2O = an N(4)-acetylcytidine in tRNA + ADP + phosphate + CoA + H(+). Functionally, RNA cytidine acetyltransferase with specificity toward both 18S rRNA and tRNAs. Catalyzes the formation of N(4)-acetylcytidine (ac4C) in 18S rRNA. Required for early nucleolar cleavages of precursor rRNA at sites A0, A1 and A2 during 18S rRNA synthesis. Catalyzes the formation of ac4C in serine and leucine tRNAs. Requires a tRNA-binding adapter protein for full tRNA acetyltransferase activity but not for 18S rRNA acetylation. The protein is RNA cytidine acetyltransferase 1 of Arabidopsis thaliana (Mouse-ear cress).